The sequence spans 388 residues: F-box/LRR-repeat protein At3g59190 (388 aa).

The F-box domain occupies 11 to 64 (KDIISNLPDALLCHVLSFLPTTEAASTSVLAKRWRFLLAFVPNLDLDNMIYDRP). LRR repeat units follow at residues 151–177 (KVSG…HLSA), 180–205 (FGDE…VMIK), 228–252 (CENI…EFTD), 313–345 (TMYL…TVET), and 346–371 (DERV…IFEV).

The protein is F-box/LRR-repeat protein At3g59190 of Arabidopsis thaliana (Mouse-ear cress).